Here is a 241-residue protein sequence, read N- to C-terminus: 3-deoxy-manno-octulosonate cytidylyltransferase (241 aa).

Belongs to the KdsB family.

It is found in the cytoplasm. The enzyme catalyses 3-deoxy-alpha-D-manno-oct-2-ulosonate + CTP = CMP-3-deoxy-beta-D-manno-octulosonate + diphosphate. Its pathway is nucleotide-sugar biosynthesis; CMP-3-deoxy-D-manno-octulosonate biosynthesis; CMP-3-deoxy-D-manno-octulosonate from 3-deoxy-D-manno-octulosonate and CTP: step 1/1. It functions in the pathway bacterial outer membrane biogenesis; lipopolysaccharide biosynthesis. Functionally, activates KDO (a required 8-carbon sugar) for incorporation into bacterial lipopolysaccharide in Gram-negative bacteria. In Rickettsia rickettsii (strain Sheila Smith), this protein is 3-deoxy-manno-octulosonate cytidylyltransferase.